The following is a 917-amino-acid chain: Spermatogenesis-associated protein 31D4 (917 aa).

The chain crosses the membrane as a helical span at residues 29 to 49; the sequence is FICLSGLGLFILYLFYMVLTL. Disordered stretches follow at residues 55–80, 152–195, and 773–798; these read EKNN…KDRK, SVSP…PPPL, and SQET…RSNS. Positions 63–74 are enriched in basic residues; the sequence is HQGRARRKRKSV. Low complexity predominate over residues 152–163; the sequence is SVSPLASSASGA. Residues 164 to 177 show a composition bias toward polar residues; sequence ESSFTLASTPSATT. Over residues 782–798 the composition is skewed to basic and acidic residues; that stretch reads LLHDPETSSDEDLRSNS.

The protein belongs to the SPATA31 family.

It is found in the membrane. May play a role in spermatogenesis. This is Spermatogenesis-associated protein 31D4 (SPATA31D4) from Homo sapiens (Human).